We begin with the raw amino-acid sequence, 531 residues long: Bifunctional protein TrpGD (531 aa).

Positions 3–196 (DILLLDNIDS…LAWAQQKLEP (194 aa)) constitute a Glutamine amidotransferase type-1 domain. Position 57–59 (57–59 (GPG)) interacts with L-glutamine. C84 (nucleophile; for GATase activity) is an active-site residue. Residues Q88 and 134–135 (SL) contribute to the L-glutamine site. Active-site for GATase activity residues include H170 and E172. Residues 202-531 (PILEKLYQAQ…DRVTALAARG (330 aa)) are anthranilate phosphoribosyltransferase.

In the C-terminal section; belongs to the anthranilate phosphoribosyltransferase family. Heterotetramer consisting of two non-identical subunits: a beta subunit (TrpG) and a large alpha subunit (TrpE).

The catalysed reaction is chorismate + L-glutamine = anthranilate + pyruvate + L-glutamate + H(+). The enzyme catalyses N-(5-phospho-beta-D-ribosyl)anthranilate + diphosphate = 5-phospho-alpha-D-ribose 1-diphosphate + anthranilate. Its pathway is amino-acid biosynthesis; L-tryptophan biosynthesis; L-tryptophan from chorismate: step 1/5. It functions in the pathway amino-acid biosynthesis; L-tryptophan biosynthesis; L-tryptophan from chorismate: step 2/5. Cooperatively feedback inhibited by tryptophan. Functionally, part of a heterotetrameric complex that catalyzes the two-step biosynthesis of anthranilate, an intermediate in the biosynthesis of L-tryptophan. In the first step, the glutamine-binding beta subunit (TrpG) of anthranilate synthase (AS) provides the glutamine amidotransferase activity which generates ammonia as a substrate that, along with chorismate, is used in the second step, catalyzed by the large alpha subunit of AS (TrpE) to produce anthranilate. In the absence of TrpG, TrpE can synthesize anthranilate directly from chorismate and high concentrations of ammonia. In addition to synthesizing anthranilate, it also catalyzes the second step of the pathway, the transfer of the phosphoribosyl group of 5-phosphorylribose-1-pyrophosphate (PRPP) to anthranilate. This is Bifunctional protein TrpGD (trpGD) from Escherichia coli (strain K12).